Here is a 431-residue protein sequence, read N- to C-terminus: Probable prephenate dehydrogenase [NADP(+)] (431 aa).

An NADP(+)-binding site is contributed by 5 to 34 (FQVGIIGFGDMGRLYAEYISKAGWRVNVCD). One can recognise a Prephenate/arogenate dehydrogenase domain in the interval 5–285 (FQVGIIGFGD…GENMDRNSSG (281 aa)).

This sequence belongs to the prephenate/arogenate dehydrogenase family.

The protein resides in the cytoplasm. It carries out the reaction prephenate + NADP(+) = 3-(4-hydroxyphenyl)pyruvate + CO2 + NADPH. Its pathway is amino-acid biosynthesis; L-tyrosine biosynthesis; (4-hydroxyphenyl)pyruvate from prephenate (NADP(+) route): step 1/1. The sequence is that of Probable prephenate dehydrogenase [NADP(+)] (tyr1) from Schizosaccharomyces pombe (strain 972 / ATCC 24843) (Fission yeast).